We begin with the raw amino-acid sequence, 107 residues long: U1-lycotoxin-Ls1a (107 aa).

A signal peptide spans 1–20; it reads MMKVLVVVALLVTLISYSSS. The propeptide occupies 21 to 41; that stretch reads EGIDDLEADELLSLMANEQTR. Cystine bridges form between cysteine 44/cysteine 59, cysteine 51/cysteine 68, cysteine 58/cysteine 86, and cysteine 70/cysteine 84.

The protein belongs to the neurotoxin 19 (CSTX) family. 04 (U1-Lctx) subfamily. Expressed by the venom gland.

It is found in the secreted. This chain is U1-lycotoxin-Ls1a, found in Lycosa singoriensis (Wolf spider).